The following is a 168-amino-acid chain: Ribosome maturation factor RimP (168 aa).

It belongs to the RimP family.

The protein localises to the cytoplasm. Required for maturation of 30S ribosomal subunits. This chain is Ribosome maturation factor RimP, found in Mycoplasma mobile (strain ATCC 43663 / 163K / NCTC 11711) (Mesomycoplasma mobile).